Consider the following 130-residue polypeptide: Small ribosomal subunit protein uS9 (130 aa).

Residues 108–130 (PRMKERRKYGLKKARRAPQFSKR) form a disordered region. Basic residues predominate over residues 111–130 (KERRKYGLKKARRAPQFSKR).

Belongs to the universal ribosomal protein uS9 family.

This is Small ribosomal subunit protein uS9 from Desulforamulus reducens (strain ATCC BAA-1160 / DSM 100696 / MI-1) (Desulfotomaculum reducens).